A 366-amino-acid chain; its full sequence is Putative ankyrin repeat protein RBE_0601 (366 aa).

6 ANK repeats span residues 39–68 (KHGTALNRAIKLKDEKIITELLAKKVDINE), 94–124 (LPDEYLYKAVHQGRLDLVQYFIEEKNFDVNT), 131–160 (HGGAILSIATMGEHIDVINYLLKNGAIASQ), 162–186 (VISAILKGNIEILEKLFEYGATAHD), 210–239 (KSSNSETKEDLSNYVETLKFLLEHGGNPNA), and 250–280 (IALSALMDEPKNDTYKDICKLLIQYGADTSK).

The chain is Putative ankyrin repeat protein RBE_0601 from Rickettsia bellii (strain RML369-C).